A 301-amino-acid polypeptide reads, in one-letter code: uncharacterized protein (301 aa).

The segment covering 16–28 (EITEESEKTKTDL) has biased composition (basic and acidic residues). The segment at 16 to 38 (EITEESEKTKTDLQKANTPNKTE) is disordered. The segment covering 29–38 (QKANTPNKTE) has biased composition (polar residues). Positions 252–301 (KENVALKMLQRCGWKEGQGLGQHNQGIINPLHVEISGFVTETKHSKINDK) constitute a G-patch domain.

This is an uncharacterized protein from Schizosaccharomyces pombe (strain 972 / ATCC 24843) (Fission yeast).